A 635-amino-acid chain; its full sequence is Leucine-rich repeat and fibronectin type-III domain-containing protein 4 (635 aa).

An N-terminal signal peptide occupies residues Met-1–Ala-16. The 32-residue stretch at Cys-17–Arg-48 folds into the LRRNT domain. Topologically, residues Cys-17 to Leu-518 are extracellular. N-linked (GlcNAc...) asparagine glycans are attached at residues Asn-25 and Asn-70. LRR repeat units lie at residues Arg-49–Asn-70, Gly-73–Asp-94, Ser-97–Gly-118, Asn-121–Asp-142, Ser-146–Pro-161, Ala-170–Gln-191, and Gln-194–Ser-215. Positions Asn-234–Pro-280 constitute an LRRCT domain. An Ig-like domain is found at Pro-281–Arg-367. Cys-302 and Cys-351 are joined by a disulfide. 4 N-linked (GlcNAc...) asparagine glycosylation sites follow: Asn-324, Asn-333, Asn-376, and Asn-440. The tract at residues His-373–Gln-410 is disordered. Residues Ser-405–Ala-502 enclose the Fibronectin type-III domain. The chain crosses the membrane as a helical span at residues Thr-519 to Val-539. Over Arg-540–Val-635 the chain is Cytoplasmic. Residues His-555–Ser-583 are disordered. The segment covering Ser-565–Pro-580 has biased composition (pro residues). Residues Ser-585 and Ser-626 each carry the phosphoserine modification. The PDZ-binding signature appears at Glu-632–Val-635.

Belongs to the LRFN family. Can form heteromeric complexes with LRFN1, LRFN2, LRFN3 and LRFN5. Unable to form homophilic interactions across cell junctions. Interacts with DLG1, DLG2, DLG3 and DLG4. In terms of processing, glycosylated.

It localises to the membrane. In terms of biological role, promotes neurite outgrowth in hippocampal neurons. May play a role in redistributing DLG4 to the cell periphery. The protein is Leucine-rich repeat and fibronectin type-III domain-containing protein 4 (LRFN4) of Homo sapiens (Human).